Reading from the N-terminus, the 366-residue chain is Beta sliding clamp (366 aa).

Belongs to the beta sliding clamp family. In terms of assembly, forms a ring-shaped head-to-tail homodimer around DNA which binds and tethers DNA polymerases and other proteins to the DNA. The DNA replisome complex has a single clamp-loading complex (3 tau and 1 each of delta, delta', psi and chi subunits) which binds 3 Pol III cores (1 core on the leading strand and 2 on the lagging strand) each with a beta sliding clamp dimer. Additional proteins in the replisome are other copies of gamma, psi and chi, Ssb, DNA helicase and RNA primase.

It localises to the cytoplasm. In terms of biological role, confers DNA tethering and processivity to DNA polymerases and other proteins. Acts as a clamp, forming a ring around DNA (a reaction catalyzed by the clamp-loading complex) which diffuses in an ATP-independent manner freely and bidirectionally along dsDNA. Initially characterized for its ability to contact the catalytic subunit of DNA polymerase III (Pol III), a complex, multichain enzyme responsible for most of the replicative synthesis in bacteria; Pol III exhibits 3'-5' exonuclease proofreading activity. The beta chain is required for initiation of replication as well as for processivity of DNA replication. This is Beta sliding clamp (dnaN) from Buchnera aphidicola subsp. Acyrthosiphon pisum (strain APS) (Acyrthosiphon pisum symbiotic bacterium).